The primary structure comprises 1060 residues: Beta-galactosidase (1060 aa).

Residues N110 and D209 each contribute to the substrate site. Na(+) is bound at residue D209. Mg(2+) is bound by residues E432, H434, and E477. Substrate is bound by residues E477 and 553–556; that span reads EYAH. The Proton donor role is filled by E477. The active-site Nucleophile is the E553. Residue N613 coordinates Mg(2+). Residues F617 and N620 each contribute to the Na(+) site. Substrate-binding residues include N620 and W1035.

The protein belongs to the glycosyl hydrolase 2 family. In terms of assembly, homotetramer. It depends on Mg(2+) as a cofactor. Na(+) serves as cofactor.

The catalysed reaction is Hydrolysis of terminal non-reducing beta-D-galactose residues in beta-D-galactosides.. The protein is Beta-galactosidase of Yersinia pestis bv. Antiqua (strain Antiqua).